We begin with the raw amino-acid sequence, 420 residues long: F-box protein At5g07610 (420 aa).

The disordered stretch occupies residues 1–25; that stretch reads MSSCSRTRTKAPRSARSRRNGGFSS. A compositionally biased stretch (basic residues) spans 7-19; sequence TRTKAPRSARSRR. In terms of domain architecture, F-box spans 27–77; the sequence is SATIVADIDDVLIQILSFLPIKTLLRFKRVSKRWLSLITNPVFSNRVIKSN.

The polypeptide is F-box protein At5g07610 (Arabidopsis thaliana (Mouse-ear cress)).